Here is a 316-residue protein sequence, read N- to C-terminus: Transaldolase 1 (316 aa).

K131 acts as the Schiff-base intermediate with substrate in catalysis.

This sequence belongs to the transaldolase family. Type 1 subfamily. In terms of assembly, homodimer.

The protein resides in the cytoplasm. It carries out the reaction D-sedoheptulose 7-phosphate + D-glyceraldehyde 3-phosphate = D-erythrose 4-phosphate + beta-D-fructose 6-phosphate. Its pathway is carbohydrate degradation; pentose phosphate pathway; D-glyceraldehyde 3-phosphate and beta-D-fructose 6-phosphate from D-ribose 5-phosphate and D-xylulose 5-phosphate (non-oxidative stage): step 2/3. Its function is as follows. Transaldolase is important for the balance of metabolites in the pentose-phosphate pathway. The sequence is that of Transaldolase 1 from Pectobacterium atrosepticum (strain SCRI 1043 / ATCC BAA-672) (Erwinia carotovora subsp. atroseptica).